The following is a 215-amino-acid chain: Large ribosomal subunit protein uL4 (215 aa).

The interval 43-97 is disordered; the sequence is RRQGTHSTKTRAEVSGGGKKPWRQKGTGRARAGSTRSPIWVGGGKTHTPKPRDYS.

This sequence belongs to the universal ribosomal protein uL4 family. Part of the 50S ribosomal subunit.

Functionally, one of the primary rRNA binding proteins, this protein initially binds near the 5'-end of the 23S rRNA. It is important during the early stages of 50S assembly. It makes multiple contacts with different domains of the 23S rRNA in the assembled 50S subunit and ribosome. Its function is as follows. Forms part of the polypeptide exit tunnel. The protein is Large ribosomal subunit protein uL4 of Brachyspira pilosicoli (Serpulina pilosicoli).